Here is a 36-residue protein sequence, read N- to C-terminus: Pancreatic polypeptide (36 aa).

At Y36 the chain carries Tyrosine amide.

The protein belongs to the NPY family.

The protein localises to the secreted. In terms of biological role, hormone secreted by pancreatic cells that acts as a regulator of pancreatic and gastrointestinal functions. This Anser anser anser (Western greylag goose) protein is Pancreatic polypeptide (PPY).